We begin with the raw amino-acid sequence, 382 residues long: Anthranilate O-methyltransferase 1 (382 aa).

S-adenosyl-L-homocysteine is bound at residue Tyr-20. An anthranilate-binding site is contributed by Gln-27. Positions 61, 66, 102, 103, 146, and 147 each coordinate S-adenosyl-L-homocysteine. Trp-168 is an anthranilate binding site. The Mg(2+) site is built by Glu-268 and Phe-270.

This sequence belongs to the methyltransferase superfamily. Type-7 methyltransferase family. SABATH subfamily.

It carries out the reaction anthranilate + S-adenosyl-L-methionine = O-methyl anthranilate + S-adenosyl-L-homocysteine. Methyltransferase involved in the biosynthesis of methyl anthranilate in response to stresses. Utilizes anthranilic acid as substrate, but not salicylic acid. Produces exclusively the O-methyl ester. The chain is Anthranilate O-methyltransferase 1 (AAMT1) from Zea mays (Maize).